The following is a 65-amino-acid chain: Large ribosomal subunit protein bL35 (65 aa).

The disordered stretch occupies residues 1-26; sequence MPKIKTVRGAAKRFKKTASGGFKRKQ. Residues 10-26 show a composition bias toward basic residues; that stretch reads AAKRFKKTASGGFKRKQ.

This sequence belongs to the bacterial ribosomal protein bL35 family.

The protein is Large ribosomal subunit protein bL35 of Actinobacillus pleuropneumoniae serotype 7 (strain AP76).